We begin with the raw amino-acid sequence, 306 residues long: Ribosomal RNA small subunit methyltransferase H (306 aa).

Residues 33 to 35, Asp51, Phe78, Asp96, and Gln103 contribute to the S-adenosyl-L-methionine site; that span reads GGY.

The protein belongs to the methyltransferase superfamily. RsmH family.

It is found in the cytoplasm. It catalyses the reaction cytidine(1402) in 16S rRNA + S-adenosyl-L-methionine = N(4)-methylcytidine(1402) in 16S rRNA + S-adenosyl-L-homocysteine + H(+). In terms of biological role, specifically methylates the N4 position of cytidine in position 1402 (C1402) of 16S rRNA. This is Ribosomal RNA small subunit methyltransferase H from Rickettsia felis (strain ATCC VR-1525 / URRWXCal2) (Rickettsia azadi).